The primary structure comprises 729 residues: Subtilisin-like protease SBT4.3 (729 aa).

The N-terminal stretch at 1-23 is a signal peptide; it reads MAKLSTPLYLICLAFIFTRDVSA. The propeptide at 24–109 is activation peptide; that stretch reads NDYRQASSVY…VFPSKSHELT (86 aa). The Inhibitor I9 domain occupies 32–108; it reads VYIVYMGTLP…SVFPSKSHEL (77 aa). Asn82 is a glycosylation site (N-linked (GlcNAc...) asparagine). One can recognise a Peptidase S8 domain in the interval 113 to 580; the sequence is SWDFVGFGEK…SGQINPTKAS (468 aa). Residues Asp139 and His196 each act as charge relay system in the active site. Residues Asn275, Asn348, Asn359, and Asn363 are each glycosylated (N-linked (GlcNAc...) asparagine). The region spanning 350–436 is the PA domain; the sequence is TKFPIVYGQN…LGFEDYKSIK (87 aa). The Charge relay system role is filled by Ser521. N-linked (GlcNAc...) asparagine glycosylation is found at Asn614, Asn642, and Asn656.

The protein belongs to the peptidase S8 family. The C-terminal propeptide is autocleaved.

The protein resides in the secreted. The sequence is that of Subtilisin-like protease SBT4.3 from Arabidopsis thaliana (Mouse-ear cress).